A 375-amino-acid polypeptide reads, in one-letter code: MTCPVIELAQQLIRQPSISPDDKGCQDIMIAHLQTIGFTIERMPFGDTNNFWAYRGIGPTLAFAGHTDVVPAGDESQWEYPPFEPTIRNGMLYGRGAADMKGSLAAMIVAAERFVAAHPNHNGRLAFLITSDEEAKATHGTVKVVEALMSRNERLDYCLIGEPSSQHRLGDMVKNGRRGSLTANLTVHGIQGHVAYPHLADNPIHRVLPALQTLVNTHWDEGNEFFPATSMQIANIHAGTGSHNVIPGNVQVQFNFRFSTELTDSQIREQVETILKNHNLNYTIEWILAGQPFLTAKGELVNAVIQSIDQYCGYQPELSTSGGTSDGRFIAQMGAQVVELGPLNSTIHKVNESVSAADLQQLSRIYQRVMEQLIQ.

Histidine 66 lines the Zn(2+) pocket. Residue aspartate 68 is part of the active site. Position 99 (aspartate 99) interacts with Zn(2+). Residue glutamate 133 is the Proton acceptor of the active site. The Zn(2+) site is built by glutamate 134, glutamate 162, and histidine 348.

It belongs to the peptidase M20A family. DapE subfamily. In terms of assembly, homodimer. It depends on Zn(2+) as a cofactor. The cofactor is Co(2+).

It catalyses the reaction N-succinyl-(2S,6S)-2,6-diaminopimelate + H2O = (2S,6S)-2,6-diaminopimelate + succinate. It functions in the pathway amino-acid biosynthesis; L-lysine biosynthesis via DAP pathway; LL-2,6-diaminopimelate from (S)-tetrahydrodipicolinate (succinylase route): step 3/3. Functionally, catalyzes the hydrolysis of N-succinyl-L,L-diaminopimelic acid (SDAP), forming succinate and LL-2,6-diaminopimelate (DAP), an intermediate involved in the bacterial biosynthesis of lysine and meso-diaminopimelic acid, an essential component of bacterial cell walls. The chain is Succinyl-diaminopimelate desuccinylase from Photorhabdus laumondii subsp. laumondii (strain DSM 15139 / CIP 105565 / TT01) (Photorhabdus luminescens subsp. laumondii).